Consider the following 583-residue polypeptide: L-arabonate dehydratase (583 aa).

Residues Cys56, Cys124, and Cys197 each contribute to the [4Fe-4S] cluster site.

Belongs to the IlvD/Edd family. As to quaternary structure, homodimer. It depends on [4Fe-4S] cluster as a cofactor.

It catalyses the reaction L-arabinonate = 2-dehydro-3-deoxy-L-arabinonate + H2O. With respect to regulation, activity is enhanced by Mg(2+), being optimal with a concentration of 1-10 mM Mg(2+). Its function is as follows. Catalyzes the dehydration of L-arabonate to L-2-keto-3-deoxyarabonate (L-KDA). Is involved in a degradation pathway of L-arabinose that allows A.brasilense to grow on L-arabinose as a sole carbon source. To a lesser extent, can also use D-xylonate as substrate, but not D-galactonate, D-arabonate, and D-gluconate. In Azospirillum brasilense, this protein is L-arabonate dehydratase (araC).